A 172-amino-acid chain; its full sequence is Disulfide bond formation protein B (172 aa).

Residues 1–13 (MIIRLAGMSVRQG) lie on the Cytoplasmic side of the membrane. The chain crosses the membrane as a helical span at residues 14–30 (CLLGLLMCALMMGVALV). At 31 to 48 (LQYVYGLTPCPLCIGQRI) the chain is on the periplasmic side. Cysteine 40 and cysteine 43 are disulfide-bonded. Residues 49 to 65 (AVLLAAFVFAIGALHNP) traverse the membrane as a helical segment. Over 66–72 (AGNLGRG) the chain is Cytoplasmic. Residues 73–90 (LYAGLAALASVLGLAVAA) traverse the membrane as a helical segment. Over 91-147 (RHVWLQSLPPENVPSCGPGLDYMMEVLPLWDVLSRVLAGSGECAEIHGSLLGMSIPQ) the chain is Periplasmic. A disulfide bond links cysteine 106 and cysteine 133. Residues 148–166 (WTLLGFAVLLLIPLGMLAG) traverse the membrane as a helical segment. Topologically, residues 167 to 172 (IVIRRR) are cytoplasmic.

The protein belongs to the DsbB family.

It is found in the cell inner membrane. Its function is as follows. Required for disulfide bond formation in some periplasmic proteins. Acts by oxidizing the DsbA protein. This is Disulfide bond formation protein B from Chromohalobacter salexigens (strain ATCC BAA-138 / DSM 3043 / CIP 106854 / NCIMB 13768 / 1H11).